Consider the following 63-residue polypeptide: Large ribosomal subunit protein bL32 (63 aa).

The segment covering 1–18 (MPVPKRKTSPSRRGKRRS) has biased composition (basic residues). Residues 1–26 (MPVPKRKTSPSRRGKRRSHDGLRPEN) are disordered.

It belongs to the bacterial ribosomal protein bL32 family.

This chain is Large ribosomal subunit protein bL32, found in Neorickettsia sennetsu (strain ATCC VR-367 / Miyayama) (Ehrlichia sennetsu).